Here is a 248-residue protein sequence, read N- to C-terminus: uncharacterized protein (248 aa).

Transmembrane regions (helical) follow at residues isoleucine 65–threonine 85, serine 105–tyrosine 125, isoleucine 126–isoleucine 146, leucine 156–isoleucine 176, leucine 188–serine 208, and valine 222–threonine 242.

Its subcellular location is the cell membrane. This is an uncharacterized protein from Rickettsia prowazekii (strain Madrid E).